Reading from the N-terminus, the 923-residue chain is Protocadherin gamma-B5 (923 aa).

The N-terminal stretch at 1 to 30 is a signal peptide; sequence MGSGAGELGRAERLPVLFLFLLSLFCPALC. Cadherin domains lie at 31 to 133, 134 to 242, 243 to 343, 344 to 448, 449 to 558, and 566 to 671; these read EQIR…TPKF, TQNS…PPVF, NRDV…SPEV, TFHS…APVF, HQAS…APRV, and DGSA…LPDI. The Extracellular portion of the chain corresponds to 31-687; it reads EQIRYRIPEE…SDPQAELQFY (657 aa). N-linked (GlcNAc...) asparagine glycans are attached at residues N415 and N541. A helical transmembrane segment spans residues 688-708; that stretch reads LVVALALISVLFLLAVILAVA. The Cytoplasmic segment spans residues 709–923; it reads LRLRRSSSPA…KKKSGKKEKK (215 aa). 2 disordered regions span residues 794–832 and 893–923; these read TSHPELQAPPNTDWRFSQAQRPGTSGSQNGDDTGTWPNN and ATLTNAAGKRDGKAPAGGNGNKKKSGKKEKK. Positions 807-832 are enriched in polar residues; that stretch reads WRFSQAQRPGTSGSQNGDDTGTWPNN. Positions 913–923 are enriched in basic residues; sequence NKKKSGKKEKK.

The protein localises to the cell membrane. Its function is as follows. Potential calcium-dependent cell-adhesion protein. May be involved in the establishment and maintenance of specific neuronal connections in the brain. The chain is Protocadherin gamma-B5 (PCDHGB5) from Homo sapiens (Human).